We begin with the raw amino-acid sequence, 254 residues long: Small ribosomal subunit protein uS2 (254 aa).

The interval 225–254 (ALSERKREKDDAKLKEDEESKKASDKAEIQ) is disordered. The span at 226–254 (LSERKREKDDAKLKEDEESKKASDKAEIQ) shows a compositional bias: basic and acidic residues.

Belongs to the universal ribosomal protein uS2 family.

The chain is Small ribosomal subunit protein uS2 from Cytophaga hutchinsonii (strain ATCC 33406 / DSM 1761 / CIP 103989 / NBRC 15051 / NCIMB 9469 / D465).